The chain runs to 330 residues: N-acetyl-gamma-glutamyl-phosphate reductase (330 aa).

C143 is an active-site residue.

This sequence belongs to the NAGSA dehydrogenase family. Type 1 subfamily.

It localises to the cytoplasm. The catalysed reaction is N-acetyl-L-glutamate 5-semialdehyde + phosphate + NADP(+) = N-acetyl-L-glutamyl 5-phosphate + NADPH + H(+). The protein operates within amino-acid biosynthesis; L-arginine biosynthesis; N(2)-acetyl-L-ornithine from L-glutamate: step 3/4. Functionally, catalyzes the NADPH-dependent reduction of N-acetyl-5-glutamyl phosphate to yield N-acetyl-L-glutamate 5-semialdehyde. This Methanocorpusculum labreanum (strain ATCC 43576 / DSM 4855 / Z) protein is N-acetyl-gamma-glutamyl-phosphate reductase.